We begin with the raw amino-acid sequence, 73 residues long: uncharacterized protein (73 aa).

Positions 8–63 (MLTRIKSVYMFIQEKGLVTTQELVDEFGITPRTIQRDLNVLAYNDLVHSPSRGKWE) constitute an HTH deoR-type domain. The H-T-H motif DNA-binding region spans 25–44 (VTTQELVDEFGITPRTIQRD).

This is an uncharacterized protein from Bacillus subtilis (strain 168).